Reading from the N-terminus, the 102-residue chain is MYAIIVTGGKQYKVEAGQAVYVEKLNVEAGEKVTFDQVVFVGGDTPKIGTPTVAGATVTGTVEKQGLEKKVVTFKYKAKKGQHTKKGHRQPYTKVVVDAINA.

It belongs to the bacterial ribosomal protein bL21 family. In terms of assembly, part of the 50S ribosomal subunit. Contacts protein L20.

Functionally, this protein binds to 23S rRNA in the presence of protein L20. This chain is Large ribosomal subunit protein bL21, found in Levilactobacillus brevis (strain ATCC 367 / BCRC 12310 / CIP 105137 / JCM 1170 / LMG 11437 / NCIMB 947 / NCTC 947) (Lactobacillus brevis).